We begin with the raw amino-acid sequence, 1067 residues long: Ubiquitin carboxyl-terminal hydrolase 26 (1067 aa).

Basic residues predominate over residues 1–12 (MSRPNTRNKNKR). The interval 1–22 (MSRPNTRNKNKRQRPDAVDSSS) is disordered. Residues 106–442 (AGLTNLGATC…DAYMLMYSLR (337 aa)) enclose the USP domain. Catalysis depends on C115, which acts as the Nucleophile. Residue H359 is the Proton acceptor of the active site. The segment at 385–418 (KRPCNEASSSTPQSESNGTASSGNITDGIQSGSS) is disordered. The span at 390-418 (EASSSTPQSESNGTASSGNITDGIQSGSS) shows a compositional bias: polar residues. 3 consecutive DUSP domains span residues 503-595 (NALT…GDYC), 610-711 (DSYR…DCTC), and 738-861 (TLKV…SAFI). The region spanning 948–1031 (FEVDRRTSKR…LWVRDTEMHE (84 aa)) is the Ubiquitin-like domain.

Belongs to the peptidase C19 family. As to expression, expressed in seedlings, roots, stems, leaves and inflorescences.

The protein localises to the nucleus. It catalyses the reaction Thiol-dependent hydrolysis of ester, thioester, amide, peptide and isopeptide bonds formed by the C-terminal Gly of ubiquitin (a 76-residue protein attached to proteins as an intracellular targeting signal).. In terms of biological role, recognizes and hydrolyzes the peptide bond at the C-terminal Gly of ubiquitin. Involved in the processing of poly-ubiquitin precursors as well as that of ubiquitinated proteins. Deubiquitinates H2BK143ub1 of histone H2B. This chain is Ubiquitin carboxyl-terminal hydrolase 26 (UBP26), found in Arabidopsis thaliana (Mouse-ear cress).